A 149-amino-acid polypeptide reads, in one-letter code: Large ribosomal subunit protein bL9 (149 aa).

This sequence belongs to the bacterial ribosomal protein bL9 family.

Its function is as follows. Binds to the 23S rRNA. This is Large ribosomal subunit protein bL9 from Proteus mirabilis (strain HI4320).